A 425-amino-acid chain; its full sequence is Riboflavin biosynthesis protein RibBA (425 aa).

A DHBP synthase region spans residues 1–204 (MTRLDSVERA…IADLIEWRRK (204 aa)). D-ribulose 5-phosphate is bound by residues 28 to 29 (RE), aspartate 33, 141 to 145 (RPGHT), and glutamate 165. Position 29 (glutamate 29) interacts with Mg(2+). Histidine 144 is a Mg(2+) binding site. The segment at 205-425 (HEKHIERVAE…HLPGEFGGAL (221 aa)) is GTP cyclohydrolase II. Residue 259-263 (RVHSE) coordinates GTP. Zn(2+)-binding residues include cysteine 264, cysteine 275, and cysteine 277. GTP is bound by residues glutamine 280, 303-305 (EGR), and threonine 325. The Proton acceptor; for GTP cyclohydrolase activity role is filled by aspartate 337. The active-site Nucleophile; for GTP cyclohydrolase activity is the arginine 339. GTP-binding residues include threonine 360 and lysine 365.

In the N-terminal section; belongs to the DHBP synthase family. It in the C-terminal section; belongs to the GTP cyclohydrolase II family. Requires Mg(2+) as cofactor. Mn(2+) serves as cofactor. Zn(2+) is required as a cofactor.

It catalyses the reaction D-ribulose 5-phosphate = (2S)-2-hydroxy-3-oxobutyl phosphate + formate + H(+). The enzyme catalyses GTP + 4 H2O = 2,5-diamino-6-hydroxy-4-(5-phosphoribosylamino)-pyrimidine + formate + 2 phosphate + 3 H(+). The protein operates within cofactor biosynthesis; riboflavin biosynthesis; 2-hydroxy-3-oxobutyl phosphate from D-ribulose 5-phosphate: step 1/1. It participates in cofactor biosynthesis; riboflavin biosynthesis; 5-amino-6-(D-ribitylamino)uracil from GTP: step 1/4. Catalyzes the conversion of D-ribulose 5-phosphate to formate and 3,4-dihydroxy-2-butanone 4-phosphate. Functionally, catalyzes the conversion of GTP to 2,5-diamino-6-ribosylamino-4(3H)-pyrimidinone 5'-phosphate (DARP), formate and pyrophosphate. This Mycobacterium marinum (strain ATCC BAA-535 / M) protein is Riboflavin biosynthesis protein RibBA.